The following is a 147-amino-acid chain: Ponticulin-like protein C3 (147 aa).

The first 20 residues, 1-20 (MKFTKSLLLLIVAVFASSNA), serve as a signal peptide directing secretion. The GPI-like-anchor amidated asparagine moiety is linked to residue asparagine 118. N-linked (GlcNAc...) asparagine glycosylation is present at asparagine 118. Residues 119–147 (SSESDSSDSTRIGASFALFALALLSMLAL) constitute a propeptide, removed in mature form.

It belongs to the ponticulin family. Post-translationally, the GPI-like-anchor contains a phosphoceramide group, rather than a phosphatidyl group.

Its subcellular location is the cell membrane. This Dictyostelium discoideum (Social amoeba) protein is Ponticulin-like protein C3 (ponC3).